Reading from the N-terminus, the 291-residue chain is Probable 2-(5''-triphosphoribosyl)-3'-dephosphocoenzyme-A synthase (291 aa).

The protein belongs to the CitG/MdcB family.

It carries out the reaction 3'-dephospho-CoA + ATP = 2'-(5''-triphospho-alpha-D-ribosyl)-3'-dephospho-CoA + adenine. Functionally, involved in the formation of 2-(5''-phosphoribosyl)-3'-dephosphocoenzyme-A, the prosthetic group of the acyl-carrier protein of the malonate decarboxylase. This is Probable 2-(5''-triphosphoribosyl)-3'-dephosphocoenzyme-A synthase from Pseudomonas syringae pv. tomato (strain ATCC BAA-871 / DC3000).